A 147-amino-acid polypeptide reads, in one-letter code: uncharacterized protein (147 aa).

This sequence to M.jannaschii MJ0215.

This is an uncharacterized protein from Methanocaldococcus jannaschii (strain ATCC 43067 / DSM 2661 / JAL-1 / JCM 10045 / NBRC 100440) (Methanococcus jannaschii).